Here is a 416-residue protein sequence, read N- to C-terminus: Diaminobutyrate--2-oxoglutarate transaminase (416 aa).

Lysine 263 carries the N6-(pyridoxal phosphate)lysine modification.

Belongs to the class-III pyridoxal-phosphate-dependent aminotransferase family. It depends on pyridoxal 5'-phosphate as a cofactor.

It carries out the reaction L-2,4-diaminobutanoate + 2-oxoglutarate = L-aspartate 4-semialdehyde + L-glutamate. It functions in the pathway amine and polyamine biosynthesis; ectoine biosynthesis; L-ectoine from L-aspartate 4-semialdehyde: step 1/3. Catalyzes reversively the conversion of L-aspartate beta-semialdehyde (ASA) to L-2,4-diaminobutyrate (DABA) by transamination with L-glutamate. The protein is Diaminobutyrate--2-oxoglutarate transaminase (ectB) of Virgibacillus pantothenticus.